We begin with the raw amino-acid sequence, 205 residues long: Large ribosomal subunit protein uL4 (205 aa).

Residues 53 to 77 (RAAVRGGGRKPWKQKGTGRARAGSI) form a disordered region. Residues 59–70 (GGRKPWKQKGTG) show a composition bias toward basic residues.

Belongs to the universal ribosomal protein uL4 family. Part of the 50S ribosomal subunit.

Functionally, one of the primary rRNA binding proteins, this protein initially binds near the 5'-end of the 23S rRNA. It is important during the early stages of 50S assembly. It makes multiple contacts with different domains of the 23S rRNA in the assembled 50S subunit and ribosome. Forms part of the polypeptide exit tunnel. This chain is Large ribosomal subunit protein uL4, found in Acidithiobacillus ferrooxidans (strain ATCC 23270 / DSM 14882 / CIP 104768 / NCIMB 8455) (Ferrobacillus ferrooxidans (strain ATCC 23270)).